We begin with the raw amino-acid sequence, 243 residues long: Outer membrane protein A (243 aa).

Transmembrane regions (beta stranded) follow at residues 1–8, 13–21, 47–56, 61–68, and 87–95; these read LTAKLGYP, LDIYTRLGG, PVFAGGLEWA, IATRLEYQ, and LLSVGVSYR. Tandem repeats lie at residues 107 to 108, 109 to 110, 111 to 112, and 113 to 114. The tract at residues 107 to 114 is 4 X 2 AA tandem repeats of A-P; sequence APAPAPAP. The OmpA-like domain occupies 116–243; sequence VQTKHFTLKS…RRVEIEVKGI (128 aa). Cysteine 217 and cysteine 229 are oxidised to a cystine.

Belongs to the outer membrane OOP (TC 1.B.6) superfamily. OmpA family. In terms of assembly, monomer and homodimer.

The protein resides in the cell outer membrane. Functionally, with TolR probably plays a role in maintaining the position of the peptidoglycan cell wall in the periplasm. Acts as a porin with low permeability that allows slow penetration of small solutes; an internal gate slows down solute passage. The sequence is that of Outer membrane protein A from Atlantibacter hermannii (Escherichia hermannii).